The primary structure comprises 351 residues: Peptide chain release factor 1 (351 aa).

Position 229 is an N5-methylglutamine (Gln229).

It belongs to the prokaryotic/mitochondrial release factor family. Methylated by PrmC. Methylation increases the termination efficiency of RF1.

It is found in the cytoplasm. Functionally, peptide chain release factor 1 directs the termination of translation in response to the peptide chain termination codons UAG and UAA. The sequence is that of Peptide chain release factor 1 from Cereibacter sphaeroides (strain ATCC 17029 / ATH 2.4.9) (Rhodobacter sphaeroides).